The chain runs to 224 residues: Orotate phosphoribosyltransferase (224 aa).

5-phospho-alpha-D-ribose 1-diphosphate contacts are provided by residues K26, 73–74 (YK), R100, K101, K104, H106, and 127–135 (EDVTTSGKS). 2 residues coordinate orotate: T131 and R160.

The protein belongs to the purine/pyrimidine phosphoribosyltransferase family. PyrE subfamily. As to quaternary structure, homodimer. Mg(2+) serves as cofactor.

The enzyme catalyses orotidine 5'-phosphate + diphosphate = orotate + 5-phospho-alpha-D-ribose 1-diphosphate. It participates in pyrimidine metabolism; UMP biosynthesis via de novo pathway; UMP from orotate: step 1/2. Its function is as follows. Catalyzes the transfer of a ribosyl phosphate group from 5-phosphoribose 1-diphosphate to orotate, leading to the formation of orotidine monophosphate (OMP). This chain is Orotate phosphoribosyltransferase, found in Clostridium botulinum (strain Alaska E43 / Type E3).